The sequence spans 276 residues: Shikimate dehydrogenase (NADP(+)) (276 aa).

Residues 20 to 22 (SRS) and threonine 67 contribute to the shikimate site. Lysine 71 functions as the Proton acceptor in the catalytic mechanism. Aspartate 83 serves as a coordination point for NADP(+). Residues asparagine 92 and aspartate 107 each contribute to the shikimate site. NADP(+) contacts are provided by residues 131–135 (GAGGA) and isoleucine 217. Position 219 (tyrosine 219) interacts with shikimate. An NADP(+)-binding site is contributed by glycine 240.

The protein belongs to the shikimate dehydrogenase family. In terms of assembly, homodimer.

It catalyses the reaction shikimate + NADP(+) = 3-dehydroshikimate + NADPH + H(+). The protein operates within metabolic intermediate biosynthesis; chorismate biosynthesis; chorismate from D-erythrose 4-phosphate and phosphoenolpyruvate: step 4/7. Functionally, involved in the biosynthesis of the chorismate, which leads to the biosynthesis of aromatic amino acids. Catalyzes the reversible NADPH linked reduction of 3-dehydroshikimate (DHSA) to yield shikimate (SA). This chain is Shikimate dehydrogenase (NADP(+)), found in Acidiphilium cryptum (strain JF-5).